Here is a 241-residue protein sequence, read N- to C-terminus: Methylthioribulose-1-phosphate dehydratase (241 aa).

Cysteine 100 contributes to the substrate binding site. Zn(2+) is bound by residues histidine 117 and histidine 119. Glutamate 146 acts as the Proton donor/acceptor in catalysis. Residue histidine 202 participates in Zn(2+) binding.

The protein belongs to the aldolase class II family. MtnB subfamily. It depends on Zn(2+) as a cofactor.

The protein localises to the cytoplasm. It catalyses the reaction 5-(methylsulfanyl)-D-ribulose 1-phosphate = 5-methylsulfanyl-2,3-dioxopentyl phosphate + H2O. The protein operates within amino-acid biosynthesis; L-methionine biosynthesis via salvage pathway; L-methionine from S-methyl-5-thio-alpha-D-ribose 1-phosphate: step 2/6. Functionally, catalyzes the dehydration of methylthioribulose-1-phosphate (MTRu-1-P) into 2,3-diketo-5-methylthiopentyl-1-phosphate (DK-MTP-1-P). This chain is Methylthioribulose-1-phosphate dehydratase, found in Ajellomyces dermatitidis (strain ER-3 / ATCC MYA-2586) (Blastomyces dermatitidis).